A 709-amino-acid chain; its full sequence is Rho guanine nucleotide exchange factor 16 (709 aa).

Position 2 is an N-acetylalanine (A2). S6, S41, and S107 each carry phosphoserine. The interval 22–70 is disordered; it reads ELRLDAGGNPASGLPMVRGSPRVRDDAAFQPQVPAPPQPRPPGHEEPWP. The disordered stretch occupies residues 114–146; that stretch reads SREAARRDPKLLPAPSFSLDDMDVDKDPGGMLR. A phosphoserine mark is found at S174, S191, and S208. Positions 180–246 are disordered; the sequence is LAEEPSQPHT…ESSSPEGTQK (67 aa). Residues 191 to 207 are compositionally biased toward basic residues; the sequence is SPAKNKKTLGRKRGHKG. At T226 the chain carries Phosphothreonine. Residues S227, S230, and S240 each carry the phosphoserine modification. The interval 275–481 is required for RHOG activation and mediates interaction with EPHA2; that stretch reads LDQLSTEERK…MERMEQMYTL (207 aa). Residues 284–468 enclose the DH domain; the sequence is KRQEAMFEIL…SKLVRQCNEG (185 aa). The PH domain maps to 501 to 620; it reads WLLKRGELFL…WIVALTHSER (120 aa). One can recognise an SH3 domain in the interval 629 to 689; the sequence is GDLPQVEITK…PEDFARFITS (61 aa). The PDZ-binding motif signature appears at 707 to 709; sequence TDV.

Interacts with ELMO2, EPHA2, RAC1 and RHOG; mediates activation of RAC1 by EPHA2. Interacts with TAX1BP3 (via PDZ domain). May interact with CDC42; stimulated by HPV16 E6.

The protein resides in the cytoplasm. In terms of biological role, guanyl-nucleotide exchange factor of the RHOG GTPase stimulating the exchange of RHOG-associated GDP for GTP. May play a role in chemotactic cell migration by mediating the activation of RAC1 by EPHA2. May also activate CDC42 and mediate activation of CDC42 by the viral protein HPV16 E6. This chain is Rho guanine nucleotide exchange factor 16 (ARHGEF16), found in Homo sapiens (Human).